A 559-amino-acid polypeptide reads, in one-letter code: Malate synthase, glyoxysomal (559 aa).

Residue Arg173 is the Proton acceptor of the active site. Asp459 acts as the Proton donor in catalysis. Residues 557 to 559 (CKL) carry the Microbody targeting signal motif.

Belongs to the malate synthase family.

The protein resides in the glyoxysome. The catalysed reaction is glyoxylate + acetyl-CoA + H2O = (S)-malate + CoA + H(+). Its pathway is carbohydrate metabolism; glyoxylate cycle; (S)-malate from isocitrate: step 2/2. This chain is Malate synthase, glyoxysomal (LIP), found in Zea mays (Maize).